The chain runs to 464 residues: Cell division protein FtsA (464 aa).

The segment at 392-464 (EVIESDKDSE…FKKLMKSLFE (73 aa)) is disordered. Residues 416 to 455 (KKENDEVAPEAPREESYEDRENHLEDEQQTEGKAKEESKF) show a composition bias toward basic and acidic residues.

Belongs to the FtsA/MreB family. In terms of assembly, self-interacts. Interacts with FtsZ.

The protein localises to the cell membrane. Functionally, cell division protein that is involved in the assembly of the Z ring. May serve as a membrane anchor for the Z ring. This Staphylococcus epidermidis (strain ATCC 35984 / DSM 28319 / BCRC 17069 / CCUG 31568 / BM 3577 / RP62A) protein is Cell division protein FtsA.